The primary structure comprises 287 residues: Phosphatidylserine decarboxylase proenzyme (287 aa).

Residues Asp-89, His-146, and Ser-252 each act as charge relay system; for autoendoproteolytic cleavage activity in the active site. Ser-252 acts as the Schiff-base intermediate with substrate; via pyruvic acid; for decarboxylase activity in catalysis. Position 252 is a pyruvic acid (Ser); by autocatalysis (Ser-252).

It belongs to the phosphatidylserine decarboxylase family. PSD-B subfamily. Prokaryotic type I sub-subfamily. Heterodimer of a large membrane-associated beta subunit and a small pyruvoyl-containing alpha subunit. Pyruvate serves as cofactor. In terms of processing, is synthesized initially as an inactive proenzyme. Formation of the active enzyme involves a self-maturation process in which the active site pyruvoyl group is generated from an internal serine residue via an autocatalytic post-translational modification. Two non-identical subunits are generated from the proenzyme in this reaction, and the pyruvate is formed at the N-terminus of the alpha chain, which is derived from the carboxyl end of the proenzyme. The autoendoproteolytic cleavage occurs by a canonical serine protease mechanism, in which the side chain hydroxyl group of the serine supplies its oxygen atom to form the C-terminus of the beta chain, while the remainder of the serine residue undergoes an oxidative deamination to produce ammonia and the pyruvoyl prosthetic group on the alpha chain. During this reaction, the Ser that is part of the protease active site of the proenzyme becomes the pyruvoyl prosthetic group, which constitutes an essential element of the active site of the mature decarboxylase.

It localises to the cell membrane. It catalyses the reaction a 1,2-diacyl-sn-glycero-3-phospho-L-serine + H(+) = a 1,2-diacyl-sn-glycero-3-phosphoethanolamine + CO2. It participates in phospholipid metabolism; phosphatidylethanolamine biosynthesis; phosphatidylethanolamine from CDP-diacylglycerol: step 2/2. Its function is as follows. Catalyzes the formation of phosphatidylethanolamine (PtdEtn) from phosphatidylserine (PtdSer). In Shewanella pealeana (strain ATCC 700345 / ANG-SQ1), this protein is Phosphatidylserine decarboxylase proenzyme.